The chain runs to 469 residues: Ribulose bisphosphate carboxylase large chain (469 aa).

At Lys5 the chain carries N6,N6,N6-trimethyllysine. Residues Asn114 and Thr164 each coordinate substrate. Lys166 serves as the catalytic Proton acceptor. Lys168 lines the substrate pocket. Positions 192, 194, and 195 each coordinate Mg(2+). Lys192 bears the N6-carboxylysine mark. Catalysis depends on His285, which acts as the Proton acceptor. Residues Arg286, His318, and Ser370 each contribute to the substrate site.

The protein belongs to the RuBisCO large chain family. Type I subfamily. In terms of assembly, heterohexadecamer of 8 large chains and 8 small chains; disulfide-linked. The disulfide link is formed within the large subunit homodimers. Requires Mg(2+) as cofactor. Post-translationally, the disulfide bond which can form in the large chain dimeric partners within the hexadecamer appears to be associated with oxidative stress and protein turnover.

It is found in the plastid. Its subcellular location is the chloroplast. It catalyses the reaction 2 (2R)-3-phosphoglycerate + 2 H(+) = D-ribulose 1,5-bisphosphate + CO2 + H2O. The catalysed reaction is D-ribulose 1,5-bisphosphate + O2 = 2-phosphoglycolate + (2R)-3-phosphoglycerate + 2 H(+). RuBisCO catalyzes two reactions: the carboxylation of D-ribulose 1,5-bisphosphate, the primary event in carbon dioxide fixation, as well as the oxidative fragmentation of the pentose substrate in the photorespiration process. Both reactions occur simultaneously and in competition at the same active site. This Fleroya rubrostipulata (Mitragyna rubrostipulata) protein is Ribulose bisphosphate carboxylase large chain.